Reading from the N-terminus, the 599-residue chain is Leucine zipper putative tumor suppressor 1 (599 aa).

Residue glycine 2 is the site of N-myristoyl glycine attachment. Disordered regions lie at residues 135–190 (GAIL…TTSS) and 288–324 (EFAS…KSQR). Residues 153–162 (PPDKPKEQEL) show a composition bias toward basic and acidic residues. Residues 174-190 (SGRNSMSSLPTHSTTSS) show a composition bias toward polar residues. Residues 256–572 (LSTDECTIQE…LEKALQQLAR (317 aa)) adopt a coiled-coil conformation. Residues 288–313 (EFASGQTFEERPRRTRDELECLEPKS) are compositionally biased toward basic and acidic residues.

Belongs to the LZTS family. In terms of assembly, binds EEF1G, TLK2 and CDK1. In terms of processing, phosphorylated on serine residues. Hyperphosphorylated by the cAMP-dependent kinase PKA during cell-cycle progression.

The protein localises to the cytoplasm. It is found in the cell membrane. Its subcellular location is the cell projection. It localises to the dendritic spine. The protein resides in the postsynaptic density. The protein localises to the synapse. In terms of biological role, involved in the regulation of cell growth. May stabilize the active CDC2-cyclin B1 complex and thereby contribute to the regulation of the cell cycle and the prevention of uncontrolled cell proliferation. May act as tumor suppressor. This Mus musculus (Mouse) protein is Leucine zipper putative tumor suppressor 1 (Lzts1).